Consider the following 350-residue polypeptide: Quinolinate phosphoribosyltransferase [decarboxylating] 1 (350 aa).

Substrate contacts are provided by residues arginine 141, 172–174 (TRK), arginine 196, lysine 206, glutamate 239, aspartate 266, 298–300 (SGN), and 319–321 (SGA).

The protein belongs to the NadC/ModD family.

It catalyses the reaction nicotinate beta-D-ribonucleotide + CO2 + diphosphate = quinolinate + 5-phospho-alpha-D-ribose 1-diphosphate + 2 H(+). It functions in the pathway alkaloid biosynthesis; nicotine biosynthesis. The protein operates within cofactor biosynthesis; NAD(+) biosynthesis; nicotinate D-ribonucleotide from quinolinate: step 1/1. Functionally, involved in the biosynthesis of pyridine alkaloid natural products, leading mainly to the production of anabasine, anatabine, nicotine and nornicotine, effective deterrents against herbivores with antiparasitic and pesticide properties (neurotoxins); nornicotine serves as the precursor in the synthesis of the carcinogen compound N'-nitrosonornicotine (NNN). Involved in the catabolism of quinolinic acid (QA). This chain is Quinolinate phosphoribosyltransferase [decarboxylating] 1, found in Nicotiana glauca (Glaucous tobacco).